We begin with the raw amino-acid sequence, 137 residues long: Chaperone protein YscB (137 aa).

As to quaternary structure, interacts with SycN to form a complex which specifically binds to YopN.

Its subcellular location is the cytoplasm. It localises to the cell inner membrane. Functions as a specific chaperone for YopN. It could facilitate the secretion and the subsequent translocation of YopN. The protein is Chaperone protein YscB (yscB) of Yersinia enterocolitica serotype O:8 / biotype 1B (strain NCTC 13174 / 8081).